The sequence spans 200 residues: 3-isopropylmalate dehydratase small subunit (200 aa).

It belongs to the LeuD family. LeuD type 1 subfamily. Heterodimer of LeuC and LeuD.

The catalysed reaction is (2R,3S)-3-isopropylmalate = (2S)-2-isopropylmalate. Its pathway is amino-acid biosynthesis; L-leucine biosynthesis; L-leucine from 3-methyl-2-oxobutanoate: step 2/4. Catalyzes the isomerization between 2-isopropylmalate and 3-isopropylmalate, via the formation of 2-isopropylmaleate. This is 3-isopropylmalate dehydratase small subunit from Serratia proteamaculans (strain 568).